The chain runs to 873 residues: V-type proton ATPase 116 kDa subunit a 2 (873 aa).

The Cytoplasmic segment spans residues 1-407 (MGSLSRSEEM…TIITFPFLFS (407 aa)). Residues 408–428 (CMFGDLGHGCIMLMAGLWFVL) traverse the membrane as a helical segment. The Lumenal segment spans residues 429–445 (REKNLQARNIKDEIFNM). A helical transmembrane segment spans residues 446–466 (FFGGRYIILLMGLFSIHAGII). At 467-543 (YNDMFAKSFN…NKLNFLNSMK (77 aa)) the chain is on the cytoplasmic side. The chain crosses the membrane as a helical span at residues 544-564 (MKLSVILGISQMTFGVILSFF). N-linked (GlcNAc...) asparagine glycosylation is found at N565 and N569. Topologically, residues 565 to 574 (NHTYNKSKID) are lumenal. A helical membrane pass occupies residues 575-595 (IFTVFIPQMLFMGCIFMYLCL). Residues 596 to 614 (QIILKWLFFWTKEATVFGQ) are Cytoplasmic-facing. The helical transmembrane segment at 615–635 (IYPGSHCAPSLLIGLINMFMM) threads the bilayer. Topologically, residues 636 to 668 (KDRNAGFVVDGGKVNGEYREVETCYLSQWYPGQ) are lumenal. Residues 669–689 (SVIEMILVVIAVICVPVMLFG) form a helical membrane-spanning segment. Topologically, residues 690–785 (KPIHHVMQQK…LWALSLAHAQ (96 aa)) are cytoplasmic. The chain crosses the membrane as a helical span at residues 786–806 (LSEVLWHMVFVTGGLGISGTA). Position 807 (G807) is a topological domain, lumenal. The chain crosses the membrane as a helical span at residues 808–828 (FIAVYVVFFIFFVLTISILVL). Topologically, residues 829–873 (MEGLSAFLHTLRLHWVEFQSKFYLGLGYPFVPYSFKTALQEAEAA) are cytoplasmic.

The protein belongs to the V-ATPase 116 kDa subunit family. As to quaternary structure, V-ATPase is a heteromultimeric enzyme made up of two complexes: the ATP-hydrolytic V1 complex and the proton translocation V0 complex. The V1 complex consists of three catalytic AB heterodimers that form a heterohexamer, three peripheral stalks each consisting of EG heterodimers, one central rotor including subunits D and F, and the regulatory subunits C and H. The proton translocation complex V0 consists of the proton transport subunit a, a ring of proteolipid subunits c9c'', rotary subunit d, subunits e and f, and the accessory subunits vah-19/Ac45 and vah-20/PRR. Interacts with V-type proton ATPase subunit C vha-11. As to expression, expressed in the H-shaped excretory cell (at protein level). Expressed in hypodermal cells around the vulva. Expressed in the main epidermal syncytium. Expressed in the sheath cells associated with head and tail sensory organs; specifically, expressed in the apical sheath cells of the amphids and CEP neuron and in the sheath cells of the OLQ sensory organ.

Its subcellular location is the apical cell membrane. The protein resides in the endosome. It is found in the multivesicular body membrane. In terms of biological role, subunit of the V0 complex of vacuolar(H+)-ATPase (V-ATPase), a multisubunit enzyme composed of a peripheral complex (V1) that hydrolyzes ATP and a membrane integral complex (V0) that translocates protons. V-ATPase is responsible for acidifying and maintaining the pH of intracellular compartments and in some cell types, is targeted to the plasma membrane, where it is responsible for acidifying the extracellular environment. Involved in the assembly of the V-ATPase complex. The V-ATPase is required for the function of the excretory canal. Independently of the V1 complex, the V0 complex of the V-ATPase is required for multivesicular body membrane fusion with the apical membrane of the epidermal cells during exosome release and thus regulates the release of cuticle components such as Hedgehog-related peptide wrt-2 but not collagen. Also, in the epidermis, regulates the trafficking of che-14 and rdy-2. Regulates the secretion of granular material found in the amphid channel and in controlling osmoregulation in the amphid pocket. This is V-type proton ATPase 116 kDa subunit a 2 from Caenorhabditis elegans.